A 502-amino-acid chain; its full sequence is Glycerol kinase (502 aa).

Threonine 14 provides a ligand contact to ADP. Positions 14, 15, and 16 each coordinate ATP. Threonine 14 provides a ligand contact to sn-glycerol 3-phosphate. ADP is bound at residue arginine 18. Sn-glycerol 3-phosphate-binding residues include arginine 84, glutamate 85, tyrosine 136, and aspartate 246. Residues arginine 84, glutamate 85, tyrosine 136, aspartate 246, and glutamine 247 each contribute to the glycerol site. ADP-binding residues include threonine 268 and glycine 311. Residues threonine 268, glycine 311, glutamine 315, and glycine 412 each coordinate ATP. The ADP site is built by glycine 412 and asparagine 416.

Belongs to the FGGY kinase family. As to quaternary structure, homotetramer and homodimer (in equilibrium). Heterodimer with EIIA-Glc. Binds 1 zinc ion per glycerol kinase EIIA-Glc dimer. The zinc ion is important for dimerization.

It carries out the reaction glycerol + ATP = sn-glycerol 3-phosphate + ADP + H(+). Its pathway is polyol metabolism; glycerol degradation via glycerol kinase pathway; sn-glycerol 3-phosphate from glycerol: step 1/1. With respect to regulation, activity of this regulatory enzyme is affected by several metabolites. Allosterically and non-competitively inhibited by fructose 1,6-bisphosphate (FBP) and unphosphorylated phosphocarrier protein EIIA-Glc (III-Glc), an integral component of the bacterial phosphotransferase (PTS) system. Its function is as follows. Key enzyme in the regulation of glycerol uptake and metabolism. Catalyzes the phosphorylation of glycerol to yield sn-glycerol 3-phosphate. The protein is Glycerol kinase of Citrobacter koseri (strain ATCC BAA-895 / CDC 4225-83 / SGSC4696).